Consider the following 366-residue polypeptide: Histone-lysine N-methyltransferase SETD7 (366 aa).

MORN repeat units follow at residues 36–58 (FEGHFVHGEKNGRGKFYFFDGST), 59–81 (LEGFYVDDALQGQGIYTYEDGGS), and 106–128 (FKGQYKDNVRHGVCWIYYPDGGS). The SET domain occupies 214–336 (ERVYVNDSLI…KDEELTVAYG (123 aa)). Residues 226–228 (AGE), asparagine 296, and histidine 297 each bind S-adenosyl-L-methionine.

This sequence belongs to the class V-like SAM-binding methyltransferase superfamily. Histone-lysine methyltransferase family. SET7 subfamily.

Its subcellular location is the nucleus. The protein localises to the chromosome. It catalyses the reaction L-lysyl(4)-[histone H3] + S-adenosyl-L-methionine = N(6)-methyl-L-lysyl(4)-[histone H3] + S-adenosyl-L-homocysteine + H(+). The enzyme catalyses L-lysyl-[protein] + S-adenosyl-L-methionine = N(6)-methyl-L-lysyl-[protein] + S-adenosyl-L-homocysteine + H(+). Its function is as follows. Histone methyltransferase that specifically monomethylates 'Lys-4' of histone H3. H3 'Lys-4' methylation represents a specific tag for epigenetic transcriptional activation. Plays a central role in the transcriptional activation of genes. Also has methyltransferase activity toward non-histone proteins. The protein is Histone-lysine N-methyltransferase SETD7 (setd7) of Xenopus tropicalis (Western clawed frog).